Reading from the N-terminus, the 214-residue chain is Uridine kinase (214 aa).

15 to 22 (GASASGKS) provides a ligand contact to ATP.

It belongs to the uridine kinase family.

It is found in the cytoplasm. It catalyses the reaction uridine + ATP = UMP + ADP + H(+). It carries out the reaction cytidine + ATP = CMP + ADP + H(+). The protein operates within pyrimidine metabolism; CTP biosynthesis via salvage pathway; CTP from cytidine: step 1/3. Its pathway is pyrimidine metabolism; UMP biosynthesis via salvage pathway; UMP from uridine: step 1/1. The sequence is that of Uridine kinase from Aeromonas salmonicida (strain A449).